Consider the following 827-residue polypeptide: uncharacterized protein (827 aa).

The PAS 1 domain maps to Phe-12 to Gly-82. The PAC 1 domain occupies Leu-212–Glu-264. The PAS 2 domain maps to Ser-265–Arg-335. In terms of domain architecture, PAC 2 spans Val-338–Leu-390. The GGDEF domain occupies Thr-428–Pro-561. Residues Arg-570 to Ser-820 enclose the EAL domain.

This is an uncharacterized protein from Sinorhizobium fredii (strain NBRC 101917 / NGR234).